A 157-amino-acid chain; its full sequence is Peptide methionine sulfoxide reductase MsrA (157 aa).

The active site involves C10.

Belongs to the MsrA Met sulfoxide reductase family.

The enzyme catalyses L-methionyl-[protein] + [thioredoxin]-disulfide + H2O = L-methionyl-(S)-S-oxide-[protein] + [thioredoxin]-dithiol. It catalyses the reaction [thioredoxin]-disulfide + L-methionine + H2O = L-methionine (S)-S-oxide + [thioredoxin]-dithiol. Its function is as follows. Has an important function as a repair enzyme for proteins that have been inactivated by oxidation. Catalyzes the reversible oxidation-reduction of methionine sulfoxide in proteins to methionine. The polypeptide is Peptide methionine sulfoxide reductase MsrA (Clostridium botulinum (strain Hall / ATCC 3502 / NCTC 13319 / Type A)).